Reading from the N-terminus, the 309-residue chain is Ornithine carbamoyltransferase (309 aa).

Residues 56–59, Gln83, Arg107, and 134–137 contribute to the carbamoyl phosphate site; these read STRT and HPCQ. L-ornithine contacts are provided by residues Asn165, Asp223, and 227–228; that span reads SM. Residues 263–264 and Arg291 each bind carbamoyl phosphate; that span reads CL.

Belongs to the aspartate/ornithine carbamoyltransferase superfamily. OTCase family.

The protein resides in the cytoplasm. The enzyme catalyses carbamoyl phosphate + L-ornithine = L-citrulline + phosphate + H(+). The protein operates within amino-acid biosynthesis; L-arginine biosynthesis; L-arginine from L-ornithine and carbamoyl phosphate: step 1/3. Its function is as follows. Reversibly catalyzes the transfer of the carbamoyl group from carbamoyl phosphate (CP) to the N(epsilon) atom of ornithine (ORN) to produce L-citrulline. The polypeptide is Ornithine carbamoyltransferase (Burkholderia mallei (strain ATCC 23344)).